Reading from the N-terminus, the 357-residue chain is Peptide chain release factor 1 (357 aa).

Glutamine 236 carries the post-translational modification N5-methylglutamine. Over residues 284–293 (RRKKDQERAN) the composition is skewed to basic and acidic residues. Positions 284–313 (RRKKDQERANNRRKQIGSGDRSERIRTYNF) are disordered.

Belongs to the prokaryotic/mitochondrial release factor family. Post-translationally, methylated by PrmC. Methylation increases the termination efficiency of RF1.

It is found in the cytoplasm. In terms of biological role, peptide chain release factor 1 directs the termination of translation in response to the peptide chain termination codons UAG and UAA. This Rickettsia bellii (strain RML369-C) protein is Peptide chain release factor 1.